A 1892-amino-acid chain; its full sequence is Protein TIC 214 (1892 aa).

Helical transmembrane passes span 12-32 (LISL…YYGF), 68-88 (FIAG…HLAL), 89-109 (GKPH…FFWN), 128-148 (LSIQ…HFIL), 176-196 (VGWL…LVWI), and 225-245 (IFSI…PSPI). Residues 256-266 (PEEVGESEEER) are compositionally biased toward acidic residues. The segment at 256-299 (PEEVGESEEERNIEIETISEGGGANQKQGTEENTSSSLFSEEEV) is disordered. Over residues 280–294 (NQKQGTEENTSSSLF) the composition is skewed to polar residues. A helical membrane pass occupies residues 1115–1135 (FYFFINFFIEKIYMDILLYII). The disordered stretch occupies residues 1613–1636 (SNQEKDVEEDYDKSDKKKRRKKKQ).

The protein belongs to the TIC214 family. As to quaternary structure, part of the Tic complex.

Its subcellular location is the plastid. The protein localises to the chloroplast inner membrane. Involved in protein precursor import into chloroplasts. May be part of an intermediate translocation complex acting as a protein-conducting channel at the inner envelope. The chain is Protein TIC 214 from Gossypium hirsutum (Upland cotton).